The sequence spans 1030 residues: Germ cell nuclear acidic protein (1030 aa).

6 disordered regions span residues 1–59 (MADH…TEDT), 196–245 (EWNG…TQLA), 266–361 (KRLA…VSSI), 375–433 (TMES…EQFL), 457–594 (LKRS…DLTY), and 699–764 (KLGI…PVAS). The segment covering 20–33 (APKDHPEKRNDQKT) has biased composition (basic and acidic residues). Composition is skewed to polar residues over residues 298–316 (EPNTLCSDSSETHNSTIHN) and 329–349 (ETSSEGELTPQKASSGSSTSG). A compositionally biased stretch (polar residues) spans 505 to 516 (LRTNQTPLNSTR). 2 stretches are compositionally biased toward basic and acidic residues: residues 541–553 (NHIDEDRWRKLID) and 578–594 (DSDKDKENKQKRGDLTY). Low complexity predominate over residues 720–748 (TPKTAPPKGTAPPKTSAPPKVSTPPKSTK).

This sequence belongs to the serine-aspartate repeat-containing protein (SDr) family.

It localises to the cytoplasm. Its subcellular location is the chromosome. Functionally, may play a role in DNA-protein cross-links (DPCs) clearance, ensuring the genomic stability by protecting germ cells and early embryos from various sources of damage. Limits replication stress and DNA double-strand breaks. The sequence is that of Germ cell nuclear acidic protein from Drosophila melanogaster (Fruit fly).